Here is a 1008-residue protein sequence, read N- to C-terminus: MVRTYLLLLLLCGPATPFFNHLMDVTRRLLDSSNATWQRDQPDTHRLSRLDAHVMSMLGVGSHIDEVSVNHSQHLHNFRSYNCEEGRRTLTMMDPKSGKFKRLKCNENQTLSKDCASCIEKKSSIMKSEHLVYDDAICQSDYSSPEAMPDHETHLCRIGPLHIQHCTHEAKRVQHVSWFWIDGKLRVYDDFSVSWTEGKFLSLFDCLNETSKDHNCNKAVCLEGRCSGDLQFCTEFTCSYAKADCNCKRNQVSGVAVVHTKHGSFMPECMGQSLWSVRKPLSKRSVTVQQPCMDCESDCKVDHILVIVRHFYPDHYQACLGSTCLTGRAKDKEFKIPFKMADRLSDSHFEIRIWDKERSNEYFLESRCESVDACAAITCWFCRANWANIHCFSKEQVLILVAVSSLCILLLASVLRALKVIATFTWKIIKPFWWILSLLCRTCSKRLNKRAERLKESIHSLEEGLNNVDEGPREQNNPARAVARPNVRQKMFNLTRLSPVVVGMLCLACPVESCSDSISVTASSQRCSTSSDGVNSCFVSTSSLLQVSPKGQESCLILKGPTGTAVDSIRIKTTDIKLECVRRDLYWVPRVTHRCIGTRRCHLMGACKGEACSEFKINDYSPEWGHEEELMAQLGWSYCVEQCGGALCQCFNMRPSCFYLRKTFSHLSQDAFNIYECSEWSYRINVLVSTNSTHSNLTLKLGVPDSIPHGLISLSSVSQPPAIAYSECFGEDLHGTKFHTVCNRRTDYTLGRIGEIQCPTKADALAVSKRCISSDSIIFSKVHKDSVDCQSSIIDPMTIRNRNKLPSTVGSVTFWPTETSVEAAIPDLASATMLIRLDGYTIQFRSDSNKCSPRFLSLSGCYNCEAGAKLELEHVTDFGTALGILECPSLGYTTYYEVKNTLEKSIRTMHLNGSHVEAKCYFRCPNSESQLTIRGELIYLFNDDIRHHNQTLSPGLSPKSGSGWDPFGWFKASWLRAIWAILGGTVSLIIGVVIIYMVFTLCLKVKKS.

The first 17 residues, 1 to 17, serve as a signal peptide directing secretion; the sequence is MVRTYLLLLLLCGPATP. The Lumenal segment spans residues 18-394; the sequence is FFNHLMDVTR…NWANIHCFSK (377 aa). 3 N-linked (GlcNAc...) asparagine; by host glycosylation sites follow: Asn34, Asn70, and Asn108. 8 cysteine pairs are disulfide-bonded: Cys138–Cys269, Cys156–Cys166, Cys206–Cys247, Cys216–Cys226, Cys233–Cys238, Cys292–Cys295, Cys299–Cys368, and Cys319–Cys324. N-linked (GlcNAc...) asparagine; by host glycosylation occurs at Asn208. Residues 395 to 415 form a helical membrane-spanning segment; that stretch reads EQVLILVAVSSLCILLLASVL. The Cytoplasmic segment spans residues 416–496; sequence RALKVIATFT…VRQKMFNLTR (81 aa). Residues 419–465 are golgi retention signal; it reads KVIATFTWKIIKPFWWILSLLCRTCSKRLNKRAERLKESIHSLEEGL. The segment at 461–465 is important for correct targeting of the glycoproteins to the Golgi complex but not for heterodimerization; sequence LEEGL. The internal signal sequence for glycoprotein C stretch occupies residues 497–513; sequence LSPVVVGMLCLACPVES. 12 disulfides stabilise this stretch: Cys514–Cys555, Cys527–Cys537, Cys580–Cys677, Cys595–Cys789, Cys601–Cys650, Cys607–Cys657, Cys612–Cys639, Cys643–Cys648, Cys728–Cys742, Cys758–Cys771, Cys851–Cys924, and Cys861–Cys864. Over 514–977 the chain is Lumenal; that stretch reads CSDSISVTAS…GWFKASWLRA (464 aa). Residues 601-607 are fusion loop; that stretch reads CHLMGAC. The tract at residues 644-655 is fusion loop; it reads GGALCQCFNMRP. 2 N-linked (GlcNAc...) asparagine; by host glycosylation sites follow: Asn691 and Asn696. N-linked (GlcNAc...) asparagine; by host glycans are attached at residues Asn912 and Asn949. A helical transmembrane segment spans residues 978–998; it reads IWAILGGTVSLIIGVVIIYMV. Over 999 to 1008 the chain is Cytoplasmic; that stretch reads FTLCLKVKKS.

The protein belongs to the phlebovirus envelope glycoprotein family. In terms of assembly, homodimer. Heterodimer with glycoprotein C. Homotrimer (postfusion). Heterodimer with glycoprotein N. Homotrimer (postfusion). In terms of processing, specific enzymatic cleavages in vivo yield mature proteins including glycoprotein C and glycoprotein N. Post-translationally, the cytoplasmic tail is Palmitoylated. Glycosylated. Contains principally poly-N-acetyllactosamine glycans. In terms of processing, glycosylated. Contains principally oligomannose-type glycans that can attach to host CD209/DC-SIGN. Post-translationally, palmitoylated.

The protein localises to the virion membrane. It localises to the host Golgi apparatus membrane. The protein resides in the host endoplasmic reticulum membrane. Structural component of the virion that interacts with glycoprotein C. It shields the hydrophobic fusion loops of the glycoprotein C, preventing premature fusion. The glycoprotein protrusions are arranged on an icosahedral lattice, with T=12 triangulation. They are able to attach the virion to the host cell receptor CD209/DC-SIGN and to promote fusion of membranes with the late endosome after endocytosis of the virion. Plays a role in the packaging of ribonucleoproteins during virus assembly. Functionally, structural component of the virion that interacts with glycoprotein N. Acts as a class II fusion protein that is activated upon acidification and subsequent repositioning of the glycoprotein N. The glycoprotein protrusions are arranged on an icosahedral lattice, with T=12 triangulation. They are able to attach the virion to the host cell receptor CD209/DC-SIGN and to promote fusion of membranes with the late endosome after endocytosis of the virion. The sequence is that of Envelopment polyprotein (GP) from Homo sapiens (Human).